The sequence spans 217 residues: Large ribosomal subunit protein uL1 (217 aa).

N-acetylserine is present on Ser2. Phosphotyrosine is present on Tyr11. An N6-acetyllysine mark is found at Lys91 and Lys106. Position 118 is an N6-acetyllysine; alternate (Lys118). Lys118 participates in a covalent cross-link: Glycyl lysine isopeptide (Lys-Gly) (interchain with G-Cter in SUMO1); alternate. Lys118 participates in a covalent cross-link: Glycyl lysine isopeptide (Lys-Gly) (interchain with G-Cter in SUMO2); alternate. Lys161 participates in a covalent cross-link: Glycyl lysine isopeptide (Lys-Gly) (interchain with G-Cter in SUMO2).

This sequence belongs to the universal ribosomal protein uL1 family. As to quaternary structure, component of the large ribosomal subunit.

It is found in the cytoplasm. In terms of biological role, component of the large ribosomal subunit. The ribosome is a large ribonucleoprotein complex responsible for the synthesis of proteins in the cell. This is Large ribosomal subunit protein uL1 (Rpl10a) from Mus musculus (Mouse).